The following is a 340-amino-acid chain: DNA-directed RNA polymerase subunit alpha (340 aa).

The tract at residues 1 to 233 (MYRNWRDLIS…EQLSIFINFD (233 aa)) is alpha N-terminal domain (alpha-NTD). The segment at 251–340 (INENLYRSVD…RLRGERKDEE (90 aa)) is alpha C-terminal domain (alpha-CTD).

The protein belongs to the RNA polymerase alpha chain family. As to quaternary structure, homodimer. The RNAP catalytic core consists of 2 alpha, 1 beta, 1 beta' and 1 omega subunit. When a sigma factor is associated with the core the holoenzyme is formed, which can initiate transcription.

It carries out the reaction RNA(n) + a ribonucleoside 5'-triphosphate = RNA(n+1) + diphosphate. Its function is as follows. DNA-dependent RNA polymerase catalyzes the transcription of DNA into RNA using the four ribonucleoside triphosphates as substrates. In Geobacter sulfurreducens (strain ATCC 51573 / DSM 12127 / PCA), this protein is DNA-directed RNA polymerase subunit alpha.